Consider the following 162-residue polypeptide: Large ribosomal subunit protein uL10 (162 aa).

The protein belongs to the universal ribosomal protein uL10 family. As to quaternary structure, part of the ribosomal stalk of the 50S ribosomal subunit. The N-terminus interacts with L11 and the large rRNA to form the base of the stalk. The C-terminus forms an elongated spine to which L12 dimers bind in a sequential fashion forming a multimeric L10(L12)X complex.

In terms of biological role, forms part of the ribosomal stalk, playing a central role in the interaction of the ribosome with GTP-bound translation factors. In Vibrio parahaemolyticus serotype O3:K6 (strain RIMD 2210633), this protein is Large ribosomal subunit protein uL10.